The sequence spans 241 residues: Probable transcriptional regulatory protein SAR11_0592 (241 aa).

The segment at 1 to 24 (MSGHSKWASIKHSKGKADKQRSKV) is disordered.

The protein belongs to the TACO1 family.

It is found in the cytoplasm. This Pelagibacter ubique (strain HTCC1062) protein is Probable transcriptional regulatory protein SAR11_0592.